A 333-amino-acid polypeptide reads, in one-letter code: O-acetyl transferase (333 aa).

The protein belongs to the acyltransferase 3 family.

It localises to the host cell inner membrane. In terms of biological role, antigenically converts S.flexneri serotype X to 3a, Y to 3b, 1a to 1b and 4a to 4b by O-acetylating the O-antigenic polysaccharide chain. This chain is O-acetyl transferase (OAC), found in Shigella flexneri (Shigella flexneri bacteriophage VI).